Consider the following 479-residue polypeptide: Glucan 1,3-beta-glucosidase 2 (479 aa).

An N-terminal signal peptide occupies residues 1 to 21; it reads MMLFLIHLMALCCMFVAEVAC. N-linked (GlcNAc...) asparagine glycans are attached at residues asparagine 25, asparagine 29, asparagine 63, asparagine 104, asparagine 187, and asparagine 193. Glutamate 227 functions as the Proton donor in the catalytic mechanism. N-linked (GlcNAc...) asparagine glycosylation is found at asparagine 254, asparagine 285, and asparagine 288. The active-site Nucleophile is histidine 306. 2 N-linked (GlcNAc...) asparagine glycosylation sites follow: asparagine 318 and asparagine 451. Serine 456 is lipidated: GPI-anchor amidated serine. The propeptide at 457-479 is removed in mature form; it reads SASAIASNKMTLLLAFLLVILVI.

It belongs to the glycosyl hydrolase 5 (cellulase A) family. Predicted to be a substrate for cleavage by KEX2.

It localises to the cell membrane. The protein resides in the secreted. It carries out the reaction Successive hydrolysis of beta-D-glucose units from the non-reducing ends of (1-&gt;3)-beta-D-glucans, releasing alpha-glucose.. Its function is as follows. Beta-glucanases participate in the metabolism of beta-glucan, the main structural component of the cell wall. EXG2 is not heavily involved in the exoglucanase function of the adhesion process. The polypeptide is Glucan 1,3-beta-glucosidase 2 (EXG2) (Candida albicans (strain SC5314 / ATCC MYA-2876) (Yeast)).